The sequence spans 117 residues: Large ribosomal subunit protein bL19 (117 aa).

It belongs to the bacterial ribosomal protein bL19 family.

This protein is located at the 30S-50S ribosomal subunit interface and may play a role in the structure and function of the aminoacyl-tRNA binding site. This chain is Large ribosomal subunit protein bL19, found in Micrococcus luteus (strain ATCC 4698 / DSM 20030 / JCM 1464 / CCM 169 / CCUG 5858 / IAM 1056 / NBRC 3333 / NCIMB 9278 / NCTC 2665 / VKM Ac-2230) (Micrococcus lysodeikticus).